Reading from the N-terminus, the 197-residue chain is Ion-translocating oxidoreductase complex subunit B (197 aa).

Positions 1–26 (MSTILIAIIALAALAAVFGAILGFAS) are hydrophobic. The region spanning 32–90 (EADPIVDQIDSILPQTQCGQCGYPGCRPYAEAIANGDQINKCPPGGQATIEKLADLMGV) is the 4Fe-4S domain. 12 residues coordinate [4Fe-4S] cluster: Cys-49, Cys-52, Cys-57, Cys-73, Cys-114, Cys-117, Cys-120, Cys-124, Cys-144, Cys-147, Cys-150, and Cys-154. 2 4Fe-4S ferredoxin-type domains span residues 105-134 (TVAF…GGTK) and 135-164 (ALHT…MIPV).

This sequence belongs to the 4Fe4S bacterial-type ferredoxin family. RnfB subfamily. In terms of assembly, the complex is composed of six subunits: RnfA, RnfB, RnfC, RnfD, RnfE and RnfG. The cofactor is [4Fe-4S] cluster.

It localises to the cell inner membrane. In terms of biological role, part of a membrane-bound complex that couples electron transfer with translocation of ions across the membrane. In Vibrio campbellii (strain ATCC BAA-1116), this protein is Ion-translocating oxidoreductase complex subunit B.